Reading from the N-terminus, the 495-residue chain is Zinc finger and SCAN domain-containing protein 5B (495 aa).

The interval 1–40 (MAANWTLSWGQGGPCNSPGSDTPRSVASPETQLGNHDRNP) is disordered. A compositionally biased stretch (polar residues) spans 17–34 (SPGSDTPRSVASPETQLG). Residues 44 to 126 (HMNFRMFSCP…DLLRNNRRPK (83 aa)) enclose the SCAN box domain. Disordered regions lie at residues 150–183 (APAS…RREQ) and 227–347 (ENRE…PDGQ). Over residues 161–173 (VSSQWASSVNQMH) the composition is skewed to polar residues. Basic and acidic residues predominate over residues 250–262 (RAKEGKEPQKRAS). Over residues 292–310 (NLSSPKRSKPDASSISQEE) the composition is skewed to polar residues. 5 consecutive C2H2-type zinc fingers follow at residues 355–377 (FACD…RRSH), 383–405 (FQCD…QRVH), 411–433 (YMCD…KRIH), 439–461 (FKCK…QRTH), and 467–489 (YKCP…LKTH).

It is found in the nucleus. In terms of biological role, may be involved in transcriptional regulation. The chain is Zinc finger and SCAN domain-containing protein 5B (ZSCAN5B) from Homo sapiens (Human).